Reading from the N-terminus, the 216-residue chain is Adenylate kinase (216 aa).

10–15 (GAGKGT) lines the ATP pocket. The tract at residues 30–59 (STGDIFRKNISENTPLGIEAKGYIDNGQLV) is NMP. Residues threonine 31, arginine 36, 57 to 59 (QLV), 85 to 88 (GFPR), and glutamine 92 contribute to the AMP site. Residues 126–163 (GRRVCPSCGASYHVKFNPPTNEGKCDLCGSEVIQRKDD) form an LID region. Arginine 127 is an ATP binding site. 2 residues coordinate Zn(2+): cysteine 130 and cysteine 133. Residue 136 to 137 (SY) coordinates ATP. Zn(2+) is bound by residues cysteine 150 and cysteine 153. Arginine 160 and arginine 171 together coordinate AMP. Residue lysine 199 coordinates ATP.

The protein belongs to the adenylate kinase family. In terms of assembly, monomer.

It localises to the cytoplasm. It carries out the reaction AMP + ATP = 2 ADP. The protein operates within purine metabolism; AMP biosynthesis via salvage pathway; AMP from ADP: step 1/1. In terms of biological role, catalyzes the reversible transfer of the terminal phosphate group between ATP and AMP. Plays an important role in cellular energy homeostasis and in adenine nucleotide metabolism. This is Adenylate kinase from Clostridium beijerinckii (strain ATCC 51743 / NCIMB 8052) (Clostridium acetobutylicum).